The following is a 155-amino-acid chain: S-ribosylhomocysteine lyase (155 aa).

Residues H54, H58, and C122 each contribute to the Fe cation site.

This sequence belongs to the LuxS family. In terms of assembly, homodimer. The cofactor is Fe cation.

The catalysed reaction is S-(5-deoxy-D-ribos-5-yl)-L-homocysteine = (S)-4,5-dihydroxypentane-2,3-dione + L-homocysteine. Involved in the synthesis of autoinducer 2 (AI-2) which is secreted by bacteria and is used to communicate both the cell density and the metabolic potential of the environment. The regulation of gene expression in response to changes in cell density is called quorum sensing. Catalyzes the transformation of S-ribosylhomocysteine (RHC) to homocysteine (HC) and 4,5-dihydroxy-2,3-pentadione (DPD). The chain is S-ribosylhomocysteine lyase from Deinococcus deserti (strain DSM 17065 / CIP 109153 / LMG 22923 / VCD115).